The primary structure comprises 234 residues: Glucosamine-6-phosphate deaminase (234 aa).

The active-site Proton acceptor; for enolization step is the aspartate 62. The active-site For ring-opening step is the asparagine 128. The active-site Proton acceptor; for ring-opening step is histidine 130. Glutamate 135 acts as the For ring-opening step in catalysis.

It belongs to the glucosamine/galactosamine-6-phosphate isomerase family. NagB subfamily.

It catalyses the reaction alpha-D-glucosamine 6-phosphate + H2O = beta-D-fructose 6-phosphate + NH4(+). It participates in amino-sugar metabolism; N-acetylneuraminate degradation; D-fructose 6-phosphate from N-acetylneuraminate: step 5/5. Its function is as follows. Catalyzes the reversible isomerization-deamination of glucosamine 6-phosphate (GlcN6P) to form fructose 6-phosphate (Fru6P) and ammonium ion. This chain is Glucosamine-6-phosphate deaminase, found in Streptococcus pyogenes serotype M49 (strain NZ131).